Reading from the N-terminus, the 147-residue chain is Large ribosomal subunit protein uL16 (147 aa).

This sequence belongs to the universal ribosomal protein uL16 family. Part of the 50S ribosomal subunit.

In terms of biological role, binds 23S rRNA and is also seen to make contacts with the A and possibly P site tRNAs. This chain is Large ribosomal subunit protein uL16, found in Clostridium botulinum (strain ATCC 19397 / Type A).